A 514-amino-acid chain; its full sequence is MSTECLKPQTGGPQSQSLSQGGQYGALASGTCLPPSTPVPWSLPRWRAYLAAAVLCYINLLNYMNWFIIPGVLLDVQKYFHISDSHAGLLQTVFISCLLVSAPVFGYLGDRYNRKAILSFGILLWSGAGLSSSFISYQYSWLFFLSRGFVGTGAASYSTIAPTVLGDLFVKDQRTCALAVFYIFIPVGSGLGYVLGSTVAELTGNWRWALRLMPCLDAMALALLILLVPDVPRGAAEKQGEVAVRAPRSSWCEDVRYLGRNWSFVFSTLGVTAIAFVTGALGFWAPKFLFEARVVHGLQLPCFQEQCHSQDSLIFGALTVATGIIGVMLGAEASRRYKKVNPRAEPLICASSLFATAPCLYLALILASRTLLASYVFLALGELLLSCNWAVVADILLSVVVPRCRGTAEALQITVAHVLGDAGSPYLTGLISSVLQAERPDSYLQHFLSLQHSFLCCAFAIVLGGGFFLLTALHLEKDQARARQPGKGTLDSKDIASRNTESQGLLSGTSTPTE.

Residues 1–22 (MSTECLKPQTGGPQSQSLSQGG) form a disordered region. Residues 9-21 (QTGGPQSQSLSQG) show a composition bias toward low complexity. The next 12 helical transmembrane spans lie at 54–74 (VLCY…GVLL), 88–108 (GLLQ…FGYL), 116–136 (AILS…SFIS), 149–169 (FVGT…GDLF), 176–196 (CALA…YVLG), 212–232 (LMPC…PDVP), 264–284 (FVFS…LGFW), 313–333 (LIFG…GAEA), 347–367 (LICA…LILA), 376–396 (VFLA…ADIL), 415–435 (VAHV…SSVL), and 453–473 (SFLC…LTAL). The disordered stretch occupies residues 482-514 (ARQPGKGTLDSKDIASRNTESQGLLSGTSTPTE). The span at 497-514 (SRNTESQGLLSGTSTPTE) shows a compositional bias: polar residues.

The protein belongs to the major facilitator superfamily. Spinster (TC 2.A.1.49) family.

It localises to the membrane. Sphingolipid transporter. This chain is Protein spinster homolog 3 (Spns3), found in Mus musculus (Mouse).